Here is a 117-residue protein sequence, read N- to C-terminus: Pancreatic progenitor cell differentiation and proliferation factor A (117 aa).

Residues 22 to 46 are disordered; sequence GSTSSNSSCSSSEYTGEVIPHPPGL. Low complexity predominate over residues 23 to 33; it reads STSSNSSCSSS.

This sequence belongs to the PPDPF family. As to expression, expressed exclusively in the exocrine cells during pancreas development.

Its function is as follows. Probable regulator of exocrine pancreas development. This is Pancreatic progenitor cell differentiation and proliferation factor A (ppdpfa) from Danio rerio (Zebrafish).